Consider the following 215-residue polypeptide: uncharacterized protein (215 aa).

The protein belongs to the mimivirus L31/R44 family.

This is an uncharacterized protein from Acanthamoeba polyphaga (Amoeba).